Here is a 373-residue protein sequence, read N- to C-terminus: D-amino-acid oxidase 3 (373 aa).

The first 19 residues, 1–19 (MVKYDAVILGSGVLGLSIA), serve as a signal peptide directing secretion. Residues Ser-11, Leu-14, Asp-35, Ala-46, Ser-47, Gly-51, and Asn-53 each contribute to the FAD site. Phe-57 provides a ligand contact to anthranilate. A glycan (N-linked (GlcNAc...) asparagine) is linked at Asn-180. Cys-214 and Cys-271 are disulfide-bonded. Residues Tyr-229, Tyr-246, and Arg-296 each contribute to the anthranilate site. Residues Tyr-229, Tyr-246, and Arg-296 each contribute to the (R)-lactate site. Residues Arg-296, Gly-342, Gly-345, Tyr-346, and Gln-347 each contribute to the FAD site. The Microbody targeting signal signature appears at 371-373 (AKL).

The protein belongs to the DAMOX/DASOX family. Requires FAD as cofactor.

The protein resides in the peroxisome matrix. The enzyme catalyses a D-alpha-amino acid + O2 + H2O = a 2-oxocarboxylate + H2O2 + NH4(+). Catalyzes the oxidative deamination of D-amino acids with broad substrate specificity. Enables the organism to utilize D-amino acids as a source of nutrients. Enables the organism to utilize D-glutamate and D-methionine as a nitrogen source. Protects the organism from the toxicity of D-amino acids, including from D-glutamate. May play a role in its interaction with the host. This Cryptococcus neoformans var. grubii serotype A (strain H99 / ATCC 208821 / CBS 10515 / FGSC 9487) (Filobasidiella neoformans var. grubii) protein is D-amino-acid oxidase 3.